Reading from the N-terminus, the 208-residue chain is Uracil phosphoribosyltransferase (208 aa).

5-phospho-alpha-D-ribose 1-diphosphate contacts are provided by residues Arg-78, Arg-103, and 130 to 138 (DPMLATGGS). Residues Ile-193 and 198–200 (GDA) each bind uracil. Asp-199 provides a ligand contact to 5-phospho-alpha-D-ribose 1-diphosphate.

The protein belongs to the UPRTase family. Requires Mg(2+) as cofactor.

The catalysed reaction is UMP + diphosphate = 5-phospho-alpha-D-ribose 1-diphosphate + uracil. It functions in the pathway pyrimidine metabolism; UMP biosynthesis via salvage pathway; UMP from uracil: step 1/1. Allosterically activated by GTP. Catalyzes the conversion of uracil and 5-phospho-alpha-D-ribose 1-diphosphate (PRPP) to UMP and diphosphate. The chain is Uracil phosphoribosyltransferase from Shewanella oneidensis (strain ATCC 700550 / JCM 31522 / CIP 106686 / LMG 19005 / NCIMB 14063 / MR-1).